Consider the following 194-residue polypeptide: Large ribosomal subunit protein bL25 (194 aa).

Belongs to the bacterial ribosomal protein bL25 family. CTC subfamily. Part of the 50S ribosomal subunit; part of the 5S rRNA/L5/L18/L25 subcomplex. Contacts the 5S rRNA. Binds to the 5S rRNA independently of L5 and L18.

Functionally, this is one of the proteins that binds to the 5S RNA in the ribosome where it forms part of the central protuberance. The sequence is that of Large ribosomal subunit protein bL25 from Geotalea uraniireducens (strain Rf4) (Geobacter uraniireducens).